The primary structure comprises 191 residues: Elongation factor P (191 aa).

Residue Lys-34 is modified to N6-(3,6-diaminohexanoyl)-5-hydroxylysine.

The protein belongs to the elongation factor P family. May be beta-lysylated on the epsilon-amino group of Lys-34 by the combined action of EpmA and EpmB, and then hydroxylated on the C5 position of the same residue by EpmC (if this protein is present). Lysylation is critical for the stimulatory effect of EF-P on peptide-bond formation. The lysylation moiety may extend toward the peptidyltransferase center and stabilize the terminal 3-CCA end of the tRNA. Hydroxylation of the C5 position on Lys-34 may allow additional potential stabilizing hydrogen-bond interactions with the P-tRNA.

Its subcellular location is the cytoplasm. Its pathway is protein biosynthesis; polypeptide chain elongation. Involved in peptide bond synthesis. Alleviates ribosome stalling that occurs when 3 or more consecutive Pro residues or the sequence PPG is present in a protein, possibly by augmenting the peptidyl transferase activity of the ribosome. Modification of Lys-34 is required for alleviation. The polypeptide is Elongation factor P (Psychrobacter sp. (strain PRwf-1)).